Reading from the N-terminus, the 250-residue chain is Isoprenyl transferase (250 aa).

Aspartate 27 is a catalytic residue. Aspartate 27 contributes to the Mg(2+) binding site. Substrate contacts are provided by residues 28–31, tryptophan 32, histidine 48, and 76–78; these read GNRR and STE. Asparagine 79 functions as the Proton acceptor in the catalytic mechanism. Substrate contacts are provided by residues phenylalanine 80, arginine 82, arginine 199, and 205 to 207; that span reads RVS. Residue glutamate 218 coordinates Mg(2+).

It belongs to the UPP synthase family. As to quaternary structure, homodimer. Requires Mg(2+) as cofactor.

Functionally, catalyzes the condensation of isopentenyl diphosphate (IPP) with allylic pyrophosphates generating different type of terpenoids. The sequence is that of Isoprenyl transferase from Chlamydia abortus (strain DSM 27085 / S26/3) (Chlamydophila abortus).